We begin with the raw amino-acid sequence, 467 residues long: Ammonium transporter Rh type C (467 aa).

At 1–3 the chain is on the cytoplasmic side; the sequence is MRL. Residues 4-24 traverse the membrane as a helical segment; that stretch reads RLPVVCFLWEIAMIVLFGIFV. Topologically, residues 25-55 are extracellular; the sequence is RYNDEADPHWSEFMKAQNITSDIQNDYYFRY. Residue N42 is glycosylated (N-linked (GlcNAc...) asparagine). Residues 56-76 traverse the membrane as a helical segment; sequence PSFQDVHVMIFVGFGFLMTFL. The Cytoplasmic portion of the chain corresponds to 77 to 80; sequence KRYG. Residues 81-101 form a helical membrane-spanning segment; sequence FGSVAFNFLLAAFGIQWAILM. Over 102–119 the chain is Extracellular; the sequence is QGWFHTFKNGKILIGVES. Residues 120 to 139 traverse the membrane as a helical segment; that stretch reads LINADFCVGSVCIAFGAILG. At 140–145 the chain is on the cytoplasmic side; it reads KVSPVQ. Residues 146–168 traverse the membrane as a helical segment; the sequence is IMVMTLFQVTLFAVNEWILLNLL. Residues 169–173 are Extracellular-facing; the sequence is HVNDA. Residues 174 to 194 form a helical membrane-spanning segment; sequence GGSMTIHTFGAYFGLTVAWIL. At 195-213 the chain is on the cytoplasmic side; it reads NRPRLKQTNDKEGSVYVSD. Residues 214-234 traverse the membrane as a helical segment; that stretch reads LFSMIGTLFLWMFWPSFNSAV. The Extracellular segment spans residues 235 to 245; that stretch reads SYHGDAQHRAA. The chain crosses the membrane as a helical span at residues 246 to 266; that stretch reads INTYCSLAACVLTTVAISSVV. Over 267–271 the chain is Cytoplasmic; sequence NKKGK. Residues 272–292 traverse the membrane as a helical segment; the sequence is LEMVHIQNATLAGGVAVGTAA. The Extracellular portion of the chain corresponds to 293–295; the sequence is EMM. Residues 296–316 form a helical membrane-spanning segment; it reads LTPYGSLIVGFICGIVSTLGF. Topologically, residues 317-337 are cytoplasmic; sequence TYCSPFLSNKLRLHDTCGIHN. Residues 338 to 358 form a helical membrane-spanning segment; it reads LHAMPGLIGGIVGAVTAACAT. At 359 to 390 the chain is on the extracellular side; sequence EAVYTADGLKKMFRFEGDYATRTPSMQGGYQA. Residues 391–411 form a helical membrane-spanning segment; that stretch reads AGLCVSLAFGLVGGTVVGCIL. The Cytoplasmic segment spans residues 412–467; the sequence is KLPIWGDPSDENCFDDEVYWELPEEDEEEHLGAANQYVTHLPENFKLPDRTEVAFK.

This sequence belongs to the ammonium transporter (TC 2.A.49) family. Rh subfamily. As to quaternary structure, homotrimer.

Its subcellular location is the apical cell membrane. Functionally, functions as an ammonia transporter. This chain is Ammonium transporter Rh type C (rhcg), found in Xenopus tropicalis (Western clawed frog).